The primary structure comprises 452 residues: ADP-dependent glucose/glucosamine kinase (452 aa).

Residues 1–452 enclose the ADPK domain; that stretch reads MSWDEMYRDA…AFVSEFSLSS (452 aa). D-glucose-binding positions include Asp-33, Glu-87, 111–112, and His-174; that span reads GQ. Position 264 (Glu-264) interacts with Mg(2+). An ADP-binding site is contributed by Asn-290. Glu-293 contributes to the Mg(2+) binding site. ADP-binding positions include 339-340, Val-426, and Gly-436; that span reads HT. Asp-437 is a binding site for D-glucose. A Mg(2+)-binding site is contributed by Asp-437. Asp-437 (proton acceptor) is an active-site residue.

This sequence belongs to the ADP-dependent glucokinase family. It depends on Mg(2+) as a cofactor.

Its subcellular location is the cytoplasm. It catalyses the reaction D-glucose + ADP = D-glucose 6-phosphate + AMP + H(+). The enzyme catalyses D-glucosamine + ADP = D-glucosamine 6-phosphate + AMP + H(+). Its pathway is carbohydrate degradation; glycolysis. Its function is as follows. Catalyzes the ADP-dependent phosphorylation of D-glucose to D-glucose 6-phosphate and glucosamine to glucosamine 6-phosphate. The sequence is that of ADP-dependent glucose/glucosamine kinase from Pyrococcus abyssi (strain GE5 / Orsay).